Consider the following 827-residue polypeptide: Periplasmic nitrate reductase (827 aa).

Residues 1-32 constitute a signal peptide (tat-type signal); that stretch reads MNLSRRDFMKANAALAAASVAGLIIPVKNVNA. In terms of domain architecture, 4Fe-4S Mo/W bis-MGD-type spans 37–93; sequence ITWDKAVCRFCGTGCAVLVGTKDGRVVASQGDPDAEVNRGLNCIKGYFLPKIMYGKD. The [4Fe-4S] cluster site is built by cysteine 44, cysteine 47, cysteine 51, and cysteine 79. Mo-bis(molybdopterin guanine dinucleotide)-binding positions include lysine 81, glutamine 148, asparagine 173, cysteine 177, 210–217, 242–246, 261–263, methionine 372, glutamine 376, asparagine 482, 508–509, lysine 531, aspartate 558, and 717–726; these read WGSNMAEM, STFEH, QSD, SD, and TGRILEHWHT. Phenylalanine 793 contributes to the substrate binding site. Mo-bis(molybdopterin guanine dinucleotide) contacts are provided by asparagine 801 and lysine 818.

This sequence belongs to the prokaryotic molybdopterin-containing oxidoreductase family. NasA/NapA/NarB subfamily. In terms of assembly, component of the periplasmic nitrate reductase NapAB complex composed of NapA and NapB. It depends on [4Fe-4S] cluster as a cofactor. The cofactor is Mo-bis(molybdopterin guanine dinucleotide). In terms of processing, predicted to be exported by the Tat system. The position of the signal peptide cleavage has not been experimentally proven.

It localises to the periplasm. The catalysed reaction is 2 Fe(II)-[cytochrome] + nitrate + 2 H(+) = 2 Fe(III)-[cytochrome] + nitrite + H2O. Catalytic subunit of the periplasmic nitrate reductase complex NapAB. Receives electrons from NapB and catalyzes the reduction of nitrate to nitrite. In Histophilus somni (strain 129Pt) (Haemophilus somnus), this protein is Periplasmic nitrate reductase.